Here is a 188-residue protein sequence, read N- to C-terminus: Probable nicotinate-nucleotide adenylyltransferase (188 aa).

The protein belongs to the NadD family.

It carries out the reaction nicotinate beta-D-ribonucleotide + ATP + H(+) = deamido-NAD(+) + diphosphate. It functions in the pathway cofactor biosynthesis; NAD(+) biosynthesis; deamido-NAD(+) from nicotinate D-ribonucleotide: step 1/1. Catalyzes the reversible adenylation of nicotinate mononucleotide (NaMN) to nicotinic acid adenine dinucleotide (NaAD). This Salinispora arenicola (strain CNS-205) protein is Probable nicotinate-nucleotide adenylyltransferase.